The chain runs to 177 residues: Cytidylate kinase (177 aa).

Residue Gly-7 to Thr-15 participates in ATP binding.

The protein belongs to the cytidylate kinase family. Type 2 subfamily.

The protein resides in the cytoplasm. The enzyme catalyses CMP + ATP = CDP + ADP. It carries out the reaction dCMP + ATP = dCDP + ADP. The polypeptide is Cytidylate kinase (Methanocorpusculum labreanum (strain ATCC 43576 / DSM 4855 / Z)).